Here is a 330-residue protein sequence, read N- to C-terminus: Zinc finger Ran-binding domain-containing protein 2 (330 aa).

Position 9 is a phosphoserine (S9). The segment at 9-40 (SDGDWICPDKKCGNVNFARRTSCNRCGREKTT) adopts a RanBP2-type 1 zinc-finger fold. N6-acetyllysine occurs at positions 18, 54, and 92. Residues 65-94 (SANDWQCKTCSNVNWARRSECNMCNTPKYA) form a RanBP2-type 2 zinc finger. Residues 117–330 (REESDGEYDE…SGSRSSSKKK (214 aa)) form a disordered region. Phosphoserine is present on residues S120, S153, S181, S188, and S193. Over residues 150-163 (DKESEGEEEDEDED) the composition is skewed to acidic residues. The tract at residues 151–324 (KESEGEEEDE…SSGSSHSGSR (174 aa)) is required for nuclear targeting. Basic residues predominate over residues 196–210 (KKSNRRSRSKSRSSH). 2 stretches are compositionally biased toward low complexity: residues 211-224 (SRSS…SSSR) and 232-242 (RSSSSSQSRSR). Basic residues-rich tracts occupy residues 251–273 (SRGS…RKRS) and 298–314 (RKKR…RHRS). Residue T303 is modified to Phosphothreonine. Residues S305, S307, and R310 each carry the phosphoserine modification. A compositionally biased stretch (low complexity) spans 315–330 (SSGSSHSGSRSSSKKK).

This sequence belongs to the ZRANB2 family. As to quaternary structure, interacts with the C-terminal half of SNRNP70, the Arg/Ser-rich domain of AKAP17A as well as with U2AF1 and CLK1. Post-translationally, isoform 2 is phosphorylated on Ser-310 upon DNA damage, probably by ATM or ATR.

The protein localises to the nucleus. Splice factor required for alternative splicing of TRA2B/SFRS10 transcripts. Binds to ssRNA containing the consensus sequence 5'-AGGUAA-3'. May interfere with constitutive 5'-splice site selection. This chain is Zinc finger Ran-binding domain-containing protein 2 (ZRANB2), found in Homo sapiens (Human).